A 478-amino-acid chain; its full sequence is tRNA (guanine(10)-N(2))-methyltransferase TRMT11 (478 aa).

The disordered stretch occupies residues 457–478; it reads EERARSEMANAENVKSKGKEDV.

This sequence belongs to the class I-like SAM-binding methyltransferase superfamily. TRM11 methyltransferase family. In terms of assembly, part of the heterodimeric TRMT11-TRM112 methyltransferase complex; this complex forms an active tRNA methyltransferase, where TRMT112 acts as an activator of the catalytic subunit TRMT11.

It is found in the cytoplasm. The enzyme catalyses guanosine(10) in tRNA + S-adenosyl-L-methionine = N(2)-methylguanosine(10) in tRNA + S-adenosyl-L-homocysteine + H(+). Functionally, catalytic subunit of the TRMT11-TRM112 methyltransferase complex, that specifically mediates the S-adenosyl-L-methionine-dependent N(2)-methylation of guanosine nucleotide at position 10 (m2G10) in tRNAs. This is one of the major tRNA (guanine-N(2))-methyltransferases. The polypeptide is tRNA (guanine(10)-N(2))-methyltransferase TRMT11 (trmt11.L) (Xenopus laevis (African clawed frog)).